Here is a 200-residue protein sequence, read N- to C-terminus: Recombination protein RecR (200 aa).

Residues 57–72 (CQHCRTFTENSLCDIC) form a C4-type zinc finger. The Toprim domain maps to 81 to 176 (GQLCIVETPA…NITRIAHGVP (96 aa)).

This sequence belongs to the RecR family.

Its function is as follows. May play a role in DNA repair. It seems to be involved in an RecBC-independent recombinational process of DNA repair. It may act with RecF and RecO. This chain is Recombination protein RecR, found in Tolumonas auensis (strain DSM 9187 / NBRC 110442 / TA 4).